We begin with the raw amino-acid sequence, 451 residues long: Glyceraldehyde-3-phosphate dehydrogenase B, chloroplastic (451 aa).

The tract at residues Met-1 to Ser-25 is disordered. Residues Met-1–Ala-84 constitute a chloroplast transit peptide. Over residues Arg-11 to Ser-25 the composition is skewed to polar residues. NADP(+)-binding positions include Arg-95–Ile-96, Asp-119, and Arg-164. D-glyceraldehyde 3-phosphate-binding positions include Ser-238–Thr-240, Thr-269, Arg-284, Thr-297–Gly-298, and Arg-320. Cys-239 acts as the Nucleophile in catalysis. Asn-403 is an NADP(+) binding site.

The protein belongs to the glyceraldehyde-3-phosphate dehydrogenase family. Tetramer of either four A chains (GAPDH 2) or two A and two B chains (GAPDH 1).

It localises to the plastid. Its subcellular location is the chloroplast. The enzyme catalyses D-glyceraldehyde 3-phosphate + phosphate + NADP(+) = (2R)-3-phospho-glyceroyl phosphate + NADPH + H(+). It participates in carbohydrate biosynthesis; Calvin cycle. The sequence is that of Glyceraldehyde-3-phosphate dehydrogenase B, chloroplastic (GAPB) from Pisum sativum (Garden pea).